The sequence spans 32 residues: Ovostatin (32 aa).

The isoglutamyl cysteine thioester (Cys-Gln) cross-link spans 27–30 (CGEQ).

The protein belongs to the protease inhibitor I39 (alpha-2-macroglobulin) family. Homotetramer, which consists of two pairs of disulfide-linked chains.

The protein localises to the secreted. Functionally, is able to inhibit all four classes of proteinases by a unique 'trapping' mechanism. This protein has a peptide stretch, called the 'bait region' which contains specific cleavage sites for different proteinases. When a proteinase cleaves the bait region, a conformational change is induced in the protein which traps the proteinase. The entrapped enzyme remains active against low molecular weight substrates (activity against high molecular weight substrates is greatly reduced). Following cleavage in the bait region a thioester bond is hydrolyzed and mediates the covalent binding of the protein to the proteinase. The polypeptide is Ovostatin (Anas platyrhynchos (Mallard)).